A 201-amino-acid polypeptide reads, in one-letter code: MIILNYNKTFFLKSISNISDIQIEHGIEIAFIGYSNSGKSSAINALTNQKKLARFSKTPGRTQLINLFQVTSDFRIVDLPGYGYAKAPLLIKIKWQNMIYSYLKNSRSLKGLVLLMDIRYPLKILDQDIISMALNCKIPILLLLTKCDKFTINNQKIQFQKVYEKLDKFLNELHIQLFSSLKKIGIEKLKSKLNFWYEKYR.

Residues 25–199 (HGIEIAFIGY…KSKLNFWYEK (175 aa)) enclose the EngB-type G domain. Residues 33-40 (GYSNSGKS), 60-64 (GRTQL), 78-81 (DLPG), 145-148 (TKCD), and 178-180 (FSS) contribute to the GTP site. Mg(2+) contacts are provided by serine 40 and threonine 62.

Belongs to the TRAFAC class TrmE-Era-EngA-EngB-Septin-like GTPase superfamily. EngB GTPase family. Requires Mg(2+) as cofactor.

Its function is as follows. Necessary for normal cell division and for the maintenance of normal septation. In Buchnera aphidicola subsp. Schizaphis graminum (strain Sg), this protein is Probable GTP-binding protein EngB.